A 160-amino-acid polypeptide reads, in one-letter code: MGVTKKPDLSDPVLRAKLAKGMGHNYYGEPAWPNDLLYIFPVVILGTIACTVGLAVLEPSMIGEPANPFATPLEILPEWYFFPVFQILRTVPNKLLGVLLMAAVPAGLLTVPFLENVNKFQNPFRRPVATTVFLIGTVVSIWLGIGAALPIDISLTLGLF.

A run of 3 helical transmembrane segments spans residues 36–56 (LLYIFPVVILGTIACTVGLAV), 95–115 (LLGVLLMAAVPAGLLTVPFLE), and 131–151 (TVFLIGTVVSIWLGIGAALPI).

This sequence belongs to the cytochrome b family. PetD subfamily. The 4 large subunits of the cytochrome b6-f complex are cytochrome b6, subunit IV (17 kDa polypeptide, petD), cytochrome f and the Rieske protein, while the 4 small subunits are petG, petL, petM and petN. The complex functions as a dimer.

The protein localises to the plastid. Its subcellular location is the chloroplast thylakoid membrane. In terms of biological role, component of the cytochrome b6-f complex, which mediates electron transfer between photosystem II (PSII) and photosystem I (PSI), cyclic electron flow around PSI, and state transitions. The protein is Cytochrome b6-f complex subunit 4 of Physcomitrium patens (Spreading-leaved earth moss).